Reading from the N-terminus, the 543-residue chain is Excitatory amino acid transporter 1 (543 aa).

At Met1–Arg47 the chain is on the cytoplasmic side. Residues Asn48–Leu68 traverse the membrane as a helical segment. Over Arg69 to Glu86 the chain is Extracellular. Residues Leu87 to Met108 form a helical membrane-spanning segment. The Cytoplasmic portion of the chain corresponds to Ala109–Arg122. The chain crosses the membrane as a helical span at residues Ala123 to Ile145. Residues His146 to Gly236 lie on the Extracellular side of the membrane. Residues Ser237–Met260 form a helical membrane-spanning segment. Residues Lys261–Glu269 lie on the Cytoplasmic side of the membrane. The chain crosses the membrane as a helical span at residues Phe270–Ile297. Residues Ala298–Thr318 lie on the Extracellular side of the membrane. Residues Val319 to Val340 form a helical membrane-spanning segment. Topologically, residues Thr341–Pro345 are cytoplasmic. Positions Trp346–Leu376 form an intramembrane region, discontinuously helical. An L-aspartate-binding site is contributed by Ser363–Ser365. Over Glu377 to Arg385 the chain is Cytoplasmic. A helical membrane pass occupies residues Ile386 to Phe412. The Na(+) site is built by Gly394, Thr396, and Asn398. Thr402 lines the L-aspartate pocket. Topologically, residues Ile413 to Gln425 are extracellular. Positions Ile426–Gly459 form an intramembrane region, discontinuously helical. Residue Ile443–Gly447 participates in L-aspartate binding. The Extracellular portion of the chain corresponds to Leu460 to Asp472. A helical membrane pass occupies residues Trp473–Val494. Asp476 and Asn483 together coordinate L-aspartate. 2 residues coordinate Na(+): Asn483 and Asp487. The Cytoplasmic segment spans residues Glu495–Met543. Ser512 is modified (phosphoserine). The interval Pro522–Met543 is disordered. The segment covering Glu531 to Met543 has biased composition (basic and acidic residues).

This sequence belongs to the dicarboxylate/amino acid:cation symporter (DAACS) (TC 2.A.23) family. SLC1A3 subfamily. Homotrimer. In terms of processing, glycosylated. Detected in brain and cerebellum. Both isoform GLAST-1 and GLAST-1A are expressed in bone and brain. In brain isoform GLAST-1 is highly enriched in the Purkinje cell layer in cerebellum.

Its subcellular location is the cell membrane. The enzyme catalyses K(+)(in) + L-glutamate(out) + 3 Na(+)(out) + H(+)(out) = K(+)(out) + L-glutamate(in) + 3 Na(+)(in) + H(+)(in). It carries out the reaction K(+)(in) + L-aspartate(out) + 3 Na(+)(out) + H(+)(out) = K(+)(out) + L-aspartate(in) + 3 Na(+)(in) + H(+)(in). The catalysed reaction is D-aspartate(out) + K(+)(in) + 3 Na(+)(out) + H(+)(out) = D-aspartate(in) + K(+)(out) + 3 Na(+)(in) + H(+)(in). Sodium-dependent, high-affinity amino acid transporter that mediates the uptake of L-glutamate and also L-aspartate and D-aspartate. Functions as a symporter that transports one amino acid molecule together with two or three Na(+) ions and one proton, in parallel with the counter-transport of one K(+) ion. Plays a redundant role in the rapid removal of released glutamate from the synaptic cleft, which is essential for terminating the postsynaptic action of glutamate. In Rattus norvegicus (Rat), this protein is Excitatory amino acid transporter 1 (Slc1a3).